A 319-amino-acid chain; its full sequence is L-galactose dehydrogenase (319 aa).

The active-site Proton donor is the Tyr59. The SIS domain occupies 122 to 269 (HCHDIEFGSL…ANKEISSVLV (148 aa)). His124 provides a ligand contact to substrate.

It belongs to the aldo/keto reductase family.

It catalyses the reaction L-galactose + NAD(+) = L-galactono-1,4-lactone + NADH + H(+). Its function is as follows. Catalyzes the oxidation of L-galactose to L-galactono-1,4-lactone in the presence of NAD(+). Uses NAD(+) as a hydrogen acceptor much more efficiently than NADP(+). The sequence is that of L-galactose dehydrogenase (LGALDH) from Arabidopsis thaliana (Mouse-ear cress).